A 174-amino-acid polypeptide reads, in one-letter code: Adipose-secreted signaling protein (174 aa).

The protein belongs to the ADISSP family.

The protein localises to the secreted. Functionally, may be involved in thermogenesis and glucose homeostasis. The polypeptide is Adipose-secreted signaling protein (Xenopus tropicalis (Western clawed frog)).